The chain runs to 131 residues: Profilin-1 (131 aa).

It belongs to the profilin family. As to quaternary structure, occurs in many kinds of cells as a complex with monomeric actin in a 1:1 ratio. As to expression, expressed at low levels roots, leaves, stems, flowers and siliques. Expressed in leaf epidermal cells, trichomes and stem epidermal cells. Detected in phloem exudates (at protein level).

Its subcellular location is the cytoplasm. The protein resides in the cytoskeleton. Its function is as follows. Binds to actin monomers and regulates the organization of the actin cytoskeleton. At high concentrations, profilin prevents the polymerization of actin, whereas it enhances it at low concentrations. At low concentrations, associates with the poly-proline motif of formins to enhance actin filament elongation rate. Binds ACT1, ACT7 and ACT11 and inhibits actin polymerization. Coordinates the stochastic dynamic properties of actin filaments by modulating formin-mediated actin nucleation and assembly during axial cell expansion. Binds G-actin and poly-L-proline in vitro. Inhibits cell growth of various pathogenic fungal strains. May play a role as antifungal proteins in the defense system against fungal pathogen attacks. This is Profilin-1 from Arabidopsis thaliana (Mouse-ear cress).